Consider the following 113-residue polypeptide: Putative membrane protein insertion efficiency factor (113 aa).

It belongs to the UPF0161 family.

The protein resides in the cell inner membrane. Functionally, could be involved in insertion of integral membrane proteins into the membrane. In Campylobacter jejuni subsp. jejuni serotype O:2 (strain ATCC 700819 / NCTC 11168), this protein is Putative membrane protein insertion efficiency factor.